Reading from the N-terminus, the 847-residue chain is Alanine--tRNA ligase (847 aa).

Zn(2+) is bound by residues histidine 554, histidine 558, cysteine 656, and histidine 660.

Belongs to the class-II aminoacyl-tRNA synthetase family. It depends on Zn(2+) as a cofactor.

The protein resides in the cytoplasm. The enzyme catalyses tRNA(Ala) + L-alanine + ATP = L-alanyl-tRNA(Ala) + AMP + diphosphate. Functionally, catalyzes the attachment of alanine to tRNA(Ala) in a two-step reaction: alanine is first activated by ATP to form Ala-AMP and then transferred to the acceptor end of tRNA(Ala). Also edits incorrectly charged Ser-tRNA(Ala) and Gly-tRNA(Ala) via its editing domain. The protein is Alanine--tRNA ligase of Helicobacter pylori (strain J99 / ATCC 700824) (Campylobacter pylori J99).